A 249-amino-acid polypeptide reads, in one-letter code: Testis-expressed protein 101 (249 aa).

The first 25 residues, 1-25 (MGTPRIQHLLILLVLGASLLTSGLE), serve as a signal peptide directing secretion. N-linked (GlcNAc...) asparagine glycans are attached at residues N45 and N159. The UPAR/Ly6 domain occupies 140–211 (CPTCVALGTC…PMFVREACPH (72 aa)). N222 carries the GPI-anchor amidated asparagine lipid modification. Residues 223 to 249 (GATCLPIPVWGLQLLLPLLLPSFIHFS) constitute a propeptide, removed in mature form.

Interacts with VAMP3. Interacts with LY6K. Interacts with DPEP3; co-localized on the cell surface of spermatocytes, spermatids, and testicular spermatozoa, co-localized only in cytoplasmic droplets of caput and corpus epididymal sperm. Interacts with ADAM5. Post-translationally, N-glycosylated; by high mannose and/or biantennary complex and/or certain types of hybrid oligosaccharides; possesses different oligosaccharides chains according to its subcellular localization in the testis. Sheds from membrane raft by ACE and released from the cell surface of epididymal sperm while it passes through the caput epididymis leading to disappearance of TEX101 on spermatozoa; is essential to produce fertile spermatozoa. Detected in testis and spermatogonia. Not detected in spermatocytes. Detected in blood leukocytes.

Its subcellular location is the cell membrane. It localises to the membrane raft. It is found in the cytoplasmic vesicle. The protein resides in the secretory vesicle. The protein localises to the acrosome. Its subcellular location is the secreted. Functionally, plays a role in fertilization by controlling binding of sperm to zona pellucida and migration of spermatozoa into the oviduct. May play a role in signal transduction and promote protein tyrosine phosphorylation. The protein is Testis-expressed protein 101 of Homo sapiens (Human).